The following is a 156-amino-acid chain: Small ribosomal subunit protein uS7 (156 aa).

The protein belongs to the universal ribosomal protein uS7 family. As to quaternary structure, part of the 30S ribosomal subunit. Contacts proteins S9 and S11.

One of the primary rRNA binding proteins, it binds directly to 16S rRNA where it nucleates assembly of the head domain of the 30S subunit. Is located at the subunit interface close to the decoding center, probably blocks exit of the E-site tRNA. The sequence is that of Small ribosomal subunit protein uS7 from Photobacterium profundum (strain SS9).